Here is a 493-residue protein sequence, read N- to C-terminus: Glutamate--tRNA ligase (493 aa).

The 'HIGH' region motif lies at 9–19 (PSPTGDPHVGT). The 'KMSKS' region motif lies at 249–253 (KLSKR). K252 is a binding site for ATP.

The protein belongs to the class-I aminoacyl-tRNA synthetase family. Glutamate--tRNA ligase type 1 subfamily. As to quaternary structure, monomer.

The protein resides in the cytoplasm. It carries out the reaction tRNA(Glu) + L-glutamate + ATP = L-glutamyl-tRNA(Glu) + AMP + diphosphate. Catalyzes the attachment of glutamate to tRNA(Glu) in a two-step reaction: glutamate is first activated by ATP to form Glu-AMP and then transferred to the acceptor end of tRNA(Glu). This Marinobacter nauticus (strain ATCC 700491 / DSM 11845 / VT8) (Marinobacter aquaeolei) protein is Glutamate--tRNA ligase.